Consider the following 795-residue polypeptide: Phenylalanine--tRNA ligase beta subunit (795 aa).

In terms of domain architecture, tRNA-binding spans 39 to 148 (AGTFNGVVVG…LDAPIGTDLR (110 aa)). Positions 401–476 (PKVNTVQLRR…RIYGYNSIPN (76 aa)) constitute a B5 domain. Positions 454, 460, 463, and 464 each coordinate Mg(2+). In terms of domain architecture, FDX-ACB spans 701-794 (SKFPANRRDL…VKQRFNAELR (94 aa)).

This sequence belongs to the phenylalanyl-tRNA synthetase beta subunit family. Type 1 subfamily. As to quaternary structure, tetramer of two alpha and two beta subunits. Mg(2+) serves as cofactor.

Its subcellular location is the cytoplasm. The enzyme catalyses tRNA(Phe) + L-phenylalanine + ATP = L-phenylalanyl-tRNA(Phe) + AMP + diphosphate + H(+). This chain is Phenylalanine--tRNA ligase beta subunit (pheT), found in Haemophilus influenzae (strain ATCC 51907 / DSM 11121 / KW20 / Rd).